The following is a 212-amino-acid chain: Golgi-associated RAB2 interactor protein 5A (212 aa).

2 disordered regions span residues 1–21 and 162–212; these read MKGG…LAPA and PFTH…LWGL. Acidic residues predominate over residues 169–185; sequence APEEEEEEEEEEEEEEV.

It belongs to the GARIN family. In terms of assembly, interacts (via N-terminus) with RAB2B (in GTP-bound form). In terms of tissue distribution, expressed in testis (at protein level).

The protein localises to the golgi apparatus. RAB2B effector protein which promotes cytosolic DNA-induced innate immune responses. Regulates IFN responses against DNA viruses by regulating the CGAS-STING signaling axis. This chain is Golgi-associated RAB2 interactor protein 5A, found in Mus musculus (Mouse).